We begin with the raw amino-acid sequence, 375 residues long: Actin (375 aa).

The protein belongs to the actin family.

It localises to the cytoplasm. It is found in the cytoskeleton. It catalyses the reaction ATP + H2O = ADP + phosphate + H(+). Actins are highly conserved proteins that are involved in various types of cell motility and are ubiquitously expressed in all eukaryotic cells. The polypeptide is Actin (Giardia intestinalis (Giardia lamblia)).